We begin with the raw amino-acid sequence, 274 residues long: NADH-ubiquinone oxidoreductase chain 2 (274 aa).

8 helical membrane-spanning segments follow: residues 28 to 48, 54 to 74, 79 to 99, 107 to 127, 128 to 148, 171 to 191, 206 to 226, and 254 to 274; these read MIIM…FWFP, LTWM…LMLI, IKYL…IGGL, LMAF…MFSE, SIWL…TFMF, FTLF…GFLP, FLLT…LRIC, and LIMT…YFMF.

This sequence belongs to the complex I subunit 2 family.

The protein localises to the mitochondrion inner membrane. It carries out the reaction a ubiquinone + NADH + 5 H(+)(in) = a ubiquinol + NAD(+) + 4 H(+)(out). Functionally, core subunit of the mitochondrial membrane respiratory chain NADH dehydrogenase (Complex I) that is believed to belong to the minimal assembly required for catalysis. Complex I functions in the transfer of electrons from NADH to the respiratory chain. The immediate electron acceptor for the enzyme is believed to be ubiquinone. The sequence is that of NADH-ubiquinone oxidoreductase chain 2 (mt:ND2) from Drosophila sechellia (Fruit fly).